The following is a 245-amino-acid chain: Protein-L-isoaspartate O-methyltransferase 1 (245 aa).

The active site involves Ser76.

It belongs to the methyltransferase superfamily. L-isoaspartyl/D-aspartyl protein methyltransferase family.

Its subcellular location is the cytoplasm. It catalyses the reaction [protein]-L-isoaspartate + S-adenosyl-L-methionine = [protein]-L-isoaspartate alpha-methyl ester + S-adenosyl-L-homocysteine. In terms of biological role, catalyzes the methyl esterification of L-isoaspartyl residues in peptides and proteins that result from spontaneous decomposition of normal L-aspartyl and L-asparaginyl residues. It plays a role in the repair and/or degradation of damaged proteins. This is Protein-L-isoaspartate O-methyltransferase 1 from Rhodopseudomonas palustris (strain HaA2).